The sequence spans 267 residues: tRNA pseudouridine synthase A (267 aa).

Asp51 serves as the catalytic Nucleophile. Tyr109 provides a ligand contact to substrate.

The protein belongs to the tRNA pseudouridine synthase TruA family. As to quaternary structure, homodimer.

It catalyses the reaction uridine(38/39/40) in tRNA = pseudouridine(38/39/40) in tRNA. Functionally, formation of pseudouridine at positions 38, 39 and 40 in the anticodon stem and loop of transfer RNAs. The sequence is that of tRNA pseudouridine synthase A from Staphylococcus carnosus (strain TM300).